A 268-amino-acid polypeptide reads, in one-letter code: MTEQYQHRARKRFGQNFLHDAGVIDKILRAIRAKPEDRLLEIGPGQGALTEGLLNSGAQLDVVELDKDLIPILTGQFGNKPNFNLHQGDALKFDFNSLGAEPRSLRVVGNLPYNISTPLIFHLLQNASLIRDMHFMLQKEVVERMAAGPGGGDWGRLSIMVQYHCRVEHLFNVGPGAFNPPPKVDSAIVRLVPYETLPHPAKDHRVLERVVREAFNQRRKTLRNTLKLLLSSDEITASGVDGSLRPEQLDLAAFVRLADTLSEKVVTE.

6 residues coordinate S-adenosyl-L-methionine: N16, L18, G43, E64, D89, and N110.

This sequence belongs to the class I-like SAM-binding methyltransferase superfamily. rRNA adenine N(6)-methyltransferase family. RsmA subfamily.

It is found in the cytoplasm. It catalyses the reaction adenosine(1518)/adenosine(1519) in 16S rRNA + 4 S-adenosyl-L-methionine = N(6)-dimethyladenosine(1518)/N(6)-dimethyladenosine(1519) in 16S rRNA + 4 S-adenosyl-L-homocysteine + 4 H(+). In terms of biological role, specifically dimethylates two adjacent adenosines (A1518 and A1519) in the loop of a conserved hairpin near the 3'-end of 16S rRNA in the 30S particle. May play a critical role in biogenesis of 30S subunits. The protein is Ribosomal RNA small subunit methyltransferase A of Pseudomonas savastanoi pv. phaseolicola (strain 1448A / Race 6) (Pseudomonas syringae pv. phaseolicola (strain 1448A / Race 6)).